Here is a 224-residue protein sequence, read N- to C-terminus: UPF0758 protein CV_3079 (224 aa).

One can recognise an MPN domain in the interval 102 to 224 (ALSSPQQVRD…AESFAERGWL (123 aa)). Positions 173, 175, and 186 each coordinate Zn(2+). Residues 173 to 186 (HNHPSGVSEPSSAD) carry the JAMM motif motif.

The protein belongs to the UPF0758 family.

This is UPF0758 protein CV_3079 from Chromobacterium violaceum (strain ATCC 12472 / DSM 30191 / JCM 1249 / CCUG 213 / NBRC 12614 / NCIMB 9131 / NCTC 9757 / MK).